A 172-amino-acid chain; its full sequence is Transcriptional regulator TAC1 (172 aa).

The tract at residues 1–28 is disordered; it reads MENIKNPKNADDCSDSISKNSHQGVDDS. Positions 15–28 are enriched in polar residues; that stretch reads DSISKNSHQGVDDS. A C2H2-type zinc finger spans residues 35-57; sequence YVCSFCIRGFSNAQALGGHMNIH. Positions 156 to 160 match the EAR-like (transcriptional repression) motif; it reads LDLEL.

As to expression, preferentially expressed in roots and flowers. Slightly expressed in leaves and stems.

It localises to the nucleus. Its function is as follows. Activation factor which mediates telomerase activity and potentiates responses to auxin through the regulation of BT2. Binds in vitro to the DNA sequence 5'-GACAGTGTTAC-3' of the BT2 promoter. The protein is Transcriptional regulator TAC1 (TAC1) of Arabidopsis thaliana (Mouse-ear cress).